Consider the following 503-residue polypeptide: ATP synthase subunit alpha (503 aa).

170–177 (GDKQTGKT) provides a ligand contact to ATP.

This sequence belongs to the ATPase alpha/beta chains family. As to quaternary structure, F-type ATPases have 2 components, CF(1) - the catalytic core - and CF(0) - the membrane proton channel. CF(1) has five subunits: alpha(3), beta(3), gamma(1), delta(1), epsilon(1). CF(0) has three main subunits: a(1), b(2) and c(9-12). The alpha and beta chains form an alternating ring which encloses part of the gamma chain. CF(1) is attached to CF(0) by a central stalk formed by the gamma and epsilon chains, while a peripheral stalk is formed by the delta and b chains.

It is found in the cell inner membrane. The catalysed reaction is ATP + H2O + 4 H(+)(in) = ADP + phosphate + 5 H(+)(out). Functionally, produces ATP from ADP in the presence of a proton gradient across the membrane. The alpha chain is a regulatory subunit. The protein is ATP synthase subunit alpha of Helicobacter pylori (strain J99 / ATCC 700824) (Campylobacter pylori J99).